Consider the following 77-residue polypeptide: U10-lycotoxin-Ls1a (77 aa).

An N-terminal signal peptide occupies residues 1-20 (MKLIIFTGLVLFAIVSLIEA). A propeptide spanning residues 21 to 26 (EEESGR) is cleaved from the precursor.

The protein belongs to the neurotoxin 19 (CSTX) family. 09 (U10-Lctx) subfamily. In terms of processing, contains 4 disulfide bonds. Expressed by the venom gland.

It localises to the secreted. This chain is U10-lycotoxin-Ls1a, found in Lycosa singoriensis (Wolf spider).